The primary structure comprises 193 residues: Ion-translocating oxidoreductase complex subunit A (193 aa).

The next 6 membrane-spanning stretches (helical) occupy residues 5–25, 39–59, 63–83, 102–122, 134–154, and 171–191; these read VLLL…FLGL, IGMS…SYLV, ILIP…VIAV, LLGI…VALL, AVYG…FAAL, and SIAL…TGLV.

Belongs to the NqrDE/RnfAE family. In terms of assembly, the complex is composed of six subunits: RnfA, RnfB, RnfC, RnfD, RnfE and RnfG.

It is found in the cell inner membrane. Its function is as follows. Part of a membrane-bound complex that couples electron transfer with translocation of ions across the membrane. The chain is Ion-translocating oxidoreductase complex subunit A from Pseudoalteromonas translucida (strain TAC 125).